Here is a 365-residue protein sequence, read N- to C-terminus: Uroporphyrinogen decarboxylase (365 aa).

A compositionally biased stretch (polar residues) spans 1–17; sequence MSANDSPSGQQTTTSAS. A disordered region spans residues 1–20; that stretch reads MSANDSPSGQQTTTSASLDA. Substrate-binding positions include 48–52, aspartate 97, tyrosine 172, serine 227, and histidine 341; that span reads RQAGR.

This sequence belongs to the uroporphyrinogen decarboxylase family. In terms of assembly, homodimer.

Its subcellular location is the cytoplasm. It carries out the reaction uroporphyrinogen III + 4 H(+) = coproporphyrinogen III + 4 CO2. It participates in porphyrin-containing compound metabolism; protoporphyrin-IX biosynthesis; coproporphyrinogen-III from 5-aminolevulinate: step 4/4. Functionally, catalyzes the decarboxylation of four acetate groups of uroporphyrinogen-III to yield coproporphyrinogen-III. The sequence is that of Uroporphyrinogen decarboxylase from Streptomyces griseus subsp. griseus (strain JCM 4626 / CBS 651.72 / NBRC 13350 / KCC S-0626 / ISP 5235).